Consider the following 108-residue polypeptide: Large ribosomal subunit protein eL32 (108 aa).

The segment covering 21–30 has biased composition (basic residues); sequence RRPRGRTSKM. Residues 21–44 are disordered; sequence RRPRGRTSKMRRYEKGKPAMPAIG.

Belongs to the eukaryotic ribosomal protein eL32 family.

In Methanothermobacter thermautotrophicus (strain ATCC 29096 / DSM 1053 / JCM 10044 / NBRC 100330 / Delta H) (Methanobacterium thermoautotrophicum), this protein is Large ribosomal subunit protein eL32 (rpl32e).